The following is a 363-amino-acid chain: dTDP-L-rhamnose 4-epimerase (363 aa).

Residues 18–24 (GGAGFIG), 68–69 (DV), and 90–94 (LAAET) contribute to the NAD(+) site. Substrate contacts are provided by S136 and Y191. 2 residues coordinate NAD(+): Y191 and K195. The active-site Proton acceptor is the Y191. 2 residues coordinate substrate: N220 and R259.

It belongs to the NAD(P)-dependent epimerase/dehydratase family. NAD(+) is required as a cofactor.

It catalyses the reaction dTDP-6-deoxy-beta-L-talose = dTDP-beta-L-rhamnose. It participates in bacterial outer membrane biogenesis; LPS O-antigen biosynthesis. Its function is as follows. Catalyzes the interconvertion of dTDP-6-deoxy-L-talose and dTDP-L-rhamnose. The equilibrium is strongly toward dTDP-L-rhamnose. In Burkholderia thailandensis (strain ATCC 700388 / DSM 13276 / CCUG 48851 / CIP 106301 / E264), this protein is dTDP-L-rhamnose 4-epimerase (wbiB).